Reading from the N-terminus, the 352-residue chain is Aromatic amino acid aminotransferase (352 aa).

The residue at position 217 (Lys217) is an N6-(pyridoxal phosphate)lysine.

The protein belongs to the class-II pyridoxal-phosphate-dependent aminotransferase family. In terms of assembly, homodimer. It depends on pyridoxal 5'-phosphate as a cofactor.

It carries out the reaction an aromatic L-alpha-amino acid + 2-oxoglutarate = an aromatic oxo-acid + L-glutamate. In terms of biological role, aminotransferase that catalyzes the conversion of aromatic amino acids and 2-oxoglutarate into corresponding aromatic oxo acids and L-glutamate. The protein is Aromatic amino acid aminotransferase of Cutibacterium acnes (strain DSM 16379 / KPA171202) (Propionibacterium acnes).